A 165-amino-acid chain; its full sequence is Regulator of sigma D (165 aa).

It belongs to the Rsd/AlgQ family. In terms of assembly, interacts with RpoD.

The protein localises to the cytoplasm. Binds RpoD and negatively regulates RpoD-mediated transcription activation by preventing the interaction between the primary sigma factor RpoD with the catalytic core of the RNA polymerase and with promoter DNA. May be involved in replacement of the RNA polymerase sigma subunit from RpoD to RpoS during the transition from exponential growth to the stationary phase. The sequence is that of Regulator of sigma D from Enterobacter sp. (strain 638).